Here is a 299-residue protein sequence, read N- to C-terminus: Zinc-alpha-2-glycoprotein (299 aa).

Positions 1–17 are cleaved as a signal peptide; sequence MVPVLLALLLLLGPAVS. 3 N-linked (GlcNAc...) asparagine glycosylation sites follow: Asn24, Asn125, and Asn256. Intrachain disulfides connect Cys120-Cys183 and Cys222-Cys277. In terms of domain architecture, Ig-like C1-type spans 204-289; sequence PSVSVTGHAA…EHRSLTRPLT (86 aa).

The protein belongs to the MHC class I family. As to quaternary structure, interacts with PIP.

The protein localises to the secreted. Functionally, stimulates lipid degradation in adipocytes and causes the extensive fat losses associated with some advanced cancers. This Bos taurus (Bovine) protein is Zinc-alpha-2-glycoprotein (AZGP1).